Reading from the N-terminus, the 923-residue chain is Protein dct-6 (923 aa).

Positions 312–347 form a coiled coil; the sequence is DMNDQIEQMISLLVDELSELEKLEQLCKEVERTGNQ.

Functionally, may have a role in tumor suppression. The protein is Protein dct-6 (dct-6) of Caenorhabditis elegans.